A 340-amino-acid polypeptide reads, in one-letter code: GTPase Obg (340 aa).

The region spanning Met-1–Ile-158 is the Obg domain. The OBG-type G domain maps to Ser-159–Lys-325. Residues Gly-165–Ser-172, Phe-190–Glu-194, Asp-211–Gly-214, Asn-278–Asp-281, and Ser-306–Ile-308 each bind GTP. The Mg(2+) site is built by Ser-172 and Thr-192.

The protein belongs to the TRAFAC class OBG-HflX-like GTPase superfamily. OBG GTPase family. In terms of assembly, monomer. The cofactor is Mg(2+).

The protein localises to the cytoplasm. Functionally, an essential GTPase which binds GTP, GDP and possibly (p)ppGpp with moderate affinity, with high nucleotide exchange rates and a fairly low GTP hydrolysis rate. Plays a role in control of the cell cycle, stress response, ribosome biogenesis and in those bacteria that undergo differentiation, in morphogenesis control. The sequence is that of GTPase Obg from Ehrlichia canis (strain Jake).